Consider the following 213-residue polypeptide: Cell division protein SepF 2 (213 aa).

The interval 16-63 is disordered; it reads EDDGYDGRGFDPDDDFEPELDPEPERDRRRHEPPHQSHQALHPQRDES. Over residues 27-39 the composition is skewed to acidic residues; that stretch reads PDDDFEPELDPEP.

It belongs to the SepF family. As to quaternary structure, homodimer. Interacts with FtsZ.

Its subcellular location is the cytoplasm. In terms of biological role, cell division protein that is part of the divisome complex and is recruited early to the Z-ring. Probably stimulates Z-ring formation, perhaps through the cross-linking of FtsZ protofilaments. Its function overlaps with FtsA. The protein is Cell division protein SepF 2 of Streptomyces avermitilis (strain ATCC 31267 / DSM 46492 / JCM 5070 / NBRC 14893 / NCIMB 12804 / NRRL 8165 / MA-4680).